The sequence spans 128 residues: Glycoprotein hormone alpha-2 (128 aa).

An N-terminal signal peptide occupies residues 1-20; sequence MPMAPRVLLLCLLGLAVTEG. Disulfide bonds link C30–C88, C47–C102, C56–C118, and C60–C120. N-linked (GlcNAc...) asparagine glycosylation is found at N36 and N80.

The protein belongs to the glycoprotein hormones subunit alpha family. Heterodimer with GPHB5; this heterodimer interacts with thyroid-stimulating hormone receptor (TSHR), and hence stimulates cAMP production.

The protein resides in the secreted. Functionally, functions as a heterodimeric glycoprotein hormone with GPHB5 able to bind and activate the thyroid-stimulating hormone receptor (TSHR), leading to increased cAMP production. Plays a central role in controlling thyroid cell metabolism. The polypeptide is Glycoprotein hormone alpha-2 (Gpha2) (Mus musculus (Mouse)).